Here is a 273-residue protein sequence, read N- to C-terminus: Probable glycerophosphodiester phosphodiesterase GpdQ (273 aa).

Positions 8, 10, 50, 80, 154, 194, and 196 each coordinate Fe cation.

The protein belongs to the cyclic nucleotide phosphodiesterase class-III family. It depends on Fe(2+) as a cofactor.

It catalyses the reaction a sn-glycero-3-phosphodiester + H2O = an alcohol + sn-glycerol 3-phosphate + H(+). It carries out the reaction sn-glycero-3-phosphoethanolamine + H2O = ethanolamine + sn-glycerol 3-phosphate + H(+). Catalyzes the hydrolysis of the 3'-5' phosphodiester bond of glycerophosphodiesters such as glycerophosphorylethanolamine (GPE), a typical phospholipid metabolite. The protein is Probable glycerophosphodiester phosphodiesterase GpdQ of Arcobacter nitrofigilis (strain ATCC 33309 / DSM 7299 / CCUG 15893 / LMG 7604 / NCTC 12251 / CI) (Campylobacter nitrofigilis).